A 173-amino-acid polypeptide reads, in one-letter code: Translocon-associated protein subunit delta (173 aa).

The N-terminal stretch at 1-23 (MAAMASFGALALLLLSGLSCCSA) is a signal peptide. Topologically, residues 24 to 144 (EACLEPQITP…SVDHRGTWNG (121 aa)) are lumenal. Cys-26 and Cys-57 are disulfide-bonded. Lys-73 participates in a covalent cross-link: Glycyl lysine isopeptide (Lys-Gly) (interchain with G-Cter in ubiquitin). The helical transmembrane segment at 145 to 165 (PWVSTEVLAAAIGIVIYYLAF) threads the bilayer. The Cytoplasmic portion of the chain corresponds to 166–173 (SAKSHIQA).

Belongs to the TRAP-delta family. In terms of assembly, heterotetramer of TRAP-alpha, TRAP-beta, TRAP-delta and TRAP-gamma.

It is found in the endoplasmic reticulum membrane. TRAP proteins are part of a complex whose function is to bind calcium to the ER membrane and thereby regulate the retention of ER resident proteins. This chain is Translocon-associated protein subunit delta (Ssr4), found in Rattus norvegicus (Rat).